Reading from the N-terminus, the 183-residue chain is Ribosome maturation factor RimM (183 aa).

Positions 103 to 183 (EEGDYYWKDL…SIEVDWDPGF (81 aa)) constitute a PRC barrel domain.

Belongs to the RimM family. In terms of assembly, binds ribosomal protein uS19.

The protein resides in the cytoplasm. An accessory protein needed during the final step in the assembly of 30S ribosomal subunit, possibly for assembly of the head region. Essential for efficient processing of 16S rRNA. May be needed both before and after RbfA during the maturation of 16S rRNA. It has affinity for free ribosomal 30S subunits but not for 70S ribosomes. This chain is Ribosome maturation factor RimM, found in Escherichia coli O157:H7 (strain EC4115 / EHEC).